Consider the following 217-residue polypeptide: GTP cyclohydrolase 1 (217 aa).

Zn(2+)-binding residues include cysteine 109, histidine 112, and cysteine 180.

Belongs to the GTP cyclohydrolase I family. In terms of assembly, toroid-shaped homodecamer, composed of two pentamers of five dimers.

It carries out the reaction GTP + H2O = 7,8-dihydroneopterin 3'-triphosphate + formate + H(+). It functions in the pathway cofactor biosynthesis; 7,8-dihydroneopterin triphosphate biosynthesis; 7,8-dihydroneopterin triphosphate from GTP: step 1/1. This chain is GTP cyclohydrolase 1, found in Vibrio cholerae serotype O1 (strain ATCC 39315 / El Tor Inaba N16961).